The chain runs to 267 residues: Undecaprenyl-diphosphatase (267 aa).

Helical transmembrane passes span 4–24, 41–61, 69–89, 96–116, 173–193, 207–227, and 239–259; these read LYALILGIIEGLTEFLPISST, FWKSFLIIIQLGSILAVIFVF, LDIWLKLAVGFFPTGVIGLFV, LFNGWVVVGMLIFGGVVFILI, AAEFSFLLAIPTMIIATAYSI, IPLGIGFITAFIVAVLVIKFF, and FGIYRIILGFVFFYLYYSGIL.

This sequence belongs to the UppP family.

The protein resides in the cell inner membrane. It catalyses the reaction di-trans,octa-cis-undecaprenyl diphosphate + H2O = di-trans,octa-cis-undecaprenyl phosphate + phosphate + H(+). In terms of biological role, catalyzes the dephosphorylation of undecaprenyl diphosphate (UPP). Confers resistance to bacitracin. The protein is Undecaprenyl-diphosphatase of Campylobacter jejuni subsp. jejuni serotype O:2 (strain ATCC 700819 / NCTC 11168).